A 367-amino-acid chain; its full sequence is Ferrochelatase (367 aa).

Residues histidine 226 and glutamate 307 each contribute to the Fe cation site.

It belongs to the ferrochelatase family.

Its subcellular location is the cytoplasm. It catalyses the reaction heme b + 2 H(+) = protoporphyrin IX + Fe(2+). Its pathway is porphyrin-containing compound metabolism; protoheme biosynthesis; protoheme from protoporphyrin-IX: step 1/1. Functionally, catalyzes the ferrous insertion into protoporphyrin IX. The polypeptide is Ferrochelatase (Burkholderia pseudomallei (strain 1106a)).